A 294-amino-acid polypeptide reads, in one-letter code: Ribosomal protein L11 methyltransferase (294 aa).

S-adenosyl-L-methionine-binding residues include T144, G165, D187, and N229.

The protein belongs to the methyltransferase superfamily. PrmA family.

The protein localises to the cytoplasm. The catalysed reaction is L-lysyl-[protein] + 3 S-adenosyl-L-methionine = N(6),N(6),N(6)-trimethyl-L-lysyl-[protein] + 3 S-adenosyl-L-homocysteine + 3 H(+). Its function is as follows. Methylates ribosomal protein L11. The protein is Ribosomal protein L11 methyltransferase of Pseudomonas paraeruginosa (strain DSM 24068 / PA7) (Pseudomonas aeruginosa (strain PA7)).